Here is a 426-residue protein sequence, read N- to C-terminus: Glutamate-1-semialdehyde 2,1-aminomutase (426 aa).

An N6-(pyridoxal phosphate)lysine modification is found at lysine 265.

This sequence belongs to the class-III pyridoxal-phosphate-dependent aminotransferase family. HemL subfamily. As to quaternary structure, homodimer. The cofactor is pyridoxal 5'-phosphate.

It localises to the cytoplasm. It carries out the reaction (S)-4-amino-5-oxopentanoate = 5-aminolevulinate. Its pathway is porphyrin-containing compound metabolism; protoporphyrin-IX biosynthesis; 5-aminolevulinate from L-glutamyl-tRNA(Glu): step 2/2. The chain is Glutamate-1-semialdehyde 2,1-aminomutase from Alcanivorax borkumensis (strain ATCC 700651 / DSM 11573 / NCIMB 13689 / SK2).